Consider the following 406-residue polypeptide: Tyrosine--tRNA ligase (406 aa).

Y35 provides a ligand contact to L-tyrosine. The 'HIGH' region signature appears at 40–49 (PTGPSLHIGH). Y168 and Q172 together coordinate L-tyrosine. The 'KMSKS' region motif lies at 228–232 (KMGKS). ATP is bound at residue K231. In terms of domain architecture, S4 RNA-binding spans 339–405 (IGIIDLFAEA…GKKRFMRIIF (67 aa)).

Belongs to the class-I aminoacyl-tRNA synthetase family. TyrS type 1 subfamily. In terms of assembly, homodimer.

The protein resides in the cytoplasm. It catalyses the reaction tRNA(Tyr) + L-tyrosine + ATP = L-tyrosyl-tRNA(Tyr) + AMP + diphosphate + H(+). In terms of biological role, catalyzes the attachment of tyrosine to tRNA(Tyr) in a two-step reaction: tyrosine is first activated by ATP to form Tyr-AMP and then transferred to the acceptor end of tRNA(Tyr). The chain is Tyrosine--tRNA ligase from Treponema denticola (strain ATCC 35405 / DSM 14222 / CIP 103919 / JCM 8153 / KCTC 15104).